The sequence spans 222 residues: Coiled-coil domain-containing protein 70 (222 aa).

Residues 129–153 are a coiled coil; sequence NALWERDRNLLQEDKALWEEEKALW.

This is Coiled-coil domain-containing protein 70 from Homo sapiens (Human).